The primary structure comprises 290 residues: Ribosomal RNA small subunit methyltransferase A (290 aa).

6 residues coordinate S-adenosyl-L-methionine: N27, L29, G54, E75, D100, and N125.

Belongs to the class I-like SAM-binding methyltransferase superfamily. rRNA adenine N(6)-methyltransferase family. RsmA subfamily.

The protein localises to the cytoplasm. It catalyses the reaction adenosine(1518)/adenosine(1519) in 16S rRNA + 4 S-adenosyl-L-methionine = N(6)-dimethyladenosine(1518)/N(6)-dimethyladenosine(1519) in 16S rRNA + 4 S-adenosyl-L-homocysteine + 4 H(+). Functionally, specifically dimethylates two adjacent adenosines (A1518 and A1519) in the loop of a conserved hairpin near the 3'-end of 16S rRNA in the 30S particle. May play a critical role in biogenesis of 30S subunits. This is Ribosomal RNA small subunit methyltransferase A from Streptococcus uberis (strain ATCC BAA-854 / 0140J).